Reading from the N-terminus, the 96-residue chain is Large ribosomal subunit protein bL28 (96 aa).

It belongs to the bacterial ribosomal protein bL28 family.

This Agrobacterium fabrum (strain C58 / ATCC 33970) (Agrobacterium tumefaciens (strain C58)) protein is Large ribosomal subunit protein bL28.